The chain runs to 109 residues: MVKLKVRKGDEVIVITGKHKGKKGKILKVFPEDSKVIVAGVNLVKKHTKPNQMSGGGIITKELPIHISNIAHIDPKTGDPTKVAFKCLDDGSKVRVAKKSGEIIGKVGK.

Belongs to the universal ribosomal protein uL24 family. As to quaternary structure, part of the 50S ribosomal subunit.

One of two assembly initiator proteins, it binds directly to the 5'-end of the 23S rRNA, where it nucleates assembly of the 50S subunit. In terms of biological role, one of the proteins that surrounds the polypeptide exit tunnel on the outside of the subunit. The sequence is that of Large ribosomal subunit protein uL24 from Rickettsia akari (strain Hartford).